Here is a 287-residue protein sequence, read N- to C-terminus: Small ribosomal subunit protein uS2 (287 aa).

The interval 233 to 287 (HKAPQDDIEPMAEWEKQLLQSGDSSGETRPISGTDRPLDGDLSKGPAPQDEELSD) is disordered. Residues 250 to 259 (LLQSGDSSGE) are compositionally biased toward polar residues.

It belongs to the universal ribosomal protein uS2 family.

This Tropheryma whipplei (strain TW08/27) (Whipple's bacillus) protein is Small ribosomal subunit protein uS2.